The sequence spans 812 residues: Outer membrane usher protein FaeD (812 aa).

A signal peptide spans 1–35 (MKKYVTTKSVQPVAFRLTTLSLVMSAVLGSASVIA). A disulfide bridge links C793 with C811.

It belongs to the fimbrial export usher family.

The protein resides in the cell outer membrane. Functionally, involved in the export and assembly of K88ab fimbrial subunits across the outer membrane. The polypeptide is Outer membrane usher protein FaeD (faeD) (Escherichia coli).